We begin with the raw amino-acid sequence, 92 residues long: MARSLKKGPFVDDHLMAKVEKLNETDKKQVVKTWSRRSTIFPQFIGHTIAVYDGRKHVPVFISEDMVGHKLGEFAPSRTYKGHASDDKKTRR.

It belongs to the universal ribosomal protein uS19 family.

Its function is as follows. Protein S19 forms a complex with S13 that binds strongly to the 16S ribosomal RNA. This is Small ribosomal subunit protein uS19 from Bacillus pumilus (strain SAFR-032).